A 454-amino-acid polypeptide reads, in one-letter code: Alpha-1,3-mannosyl-glycoprotein 4-beta-N-acetylglucosaminyltransferase C (454 aa).

Residues 1–6 are Cytoplasmic-facing; the sequence is MRCHLK. Residues 7–24 form a helical; Signal-anchor for type II membrane protein membrane-spanning segment; that stretch reads KWVVVAAGLSILTSLYVY. Residues 25–454 are Lumenal-facing; it reads MQRAQSGNLK…VWTVKEDKTI (430 aa). 2 N-linked (GlcNAc...) asparagine glycosylation sites follow: asparagine 58 and asparagine 189.

Belongs to the glycosyltransferase 54 family. Requires a divalent metal cation as cofactor.

It localises to the golgi apparatus membrane. It carries out the reaction N(4)-{beta-D-GlcNAc-(1-&gt;2)-alpha-D-Man-(1-&gt;3)-[beta-D-GlcNAc-(1-&gt;2)-alpha-D-Man-(1-&gt;6)]-beta-D-Man-(1-&gt;4)-beta-D-GlcNAc-(1-&gt;4)-beta-D-GlcNAc}-L-asparaginyl-[protein] + UDP-N-acetyl-alpha-D-glucosamine = N(4)-{beta-D-GlcNAc-(1-&gt;2)-[beta-D-GlcNAc-(1-&gt;4)]-alpha-D-Man-(1-&gt;3)-[beta-D-GlcNAc-(1-&gt;2)-alpha-D-Man-(1-&gt;6)]-beta-D-Man-(1-&gt;4)-beta-D-GlcNAc-(1-&gt;4)-beta-D-GlcNAc}-L-asparaginyl-[protein] + UDP + H(+). It participates in protein modification; protein glycosylation. In terms of biological role, glycosyltransferase that participates in the transfer of N-acetylglucosamine (GlcNAc) to the core mannose residues of N-linked glycans. Catalyzes the formation of the GlcNAcbeta1-4 branch on the GlcNAcbeta1-2Manalpha1-3 arm of the core structure of N-linked glycans. This chain is Alpha-1,3-mannosyl-glycoprotein 4-beta-N-acetylglucosaminyltransferase C (mgat4c), found in Danio rerio (Zebrafish).